We begin with the raw amino-acid sequence, 180 residues long: ATP-dependent protease subunit HslV (180 aa).

The active site involves threonine 8. Na(+) is bound by residues glycine 165, cysteine 168, and threonine 171.

Belongs to the peptidase T1B family. HslV subfamily. A double ring-shaped homohexamer of HslV is capped on each side by a ring-shaped HslU homohexamer. The assembly of the HslU/HslV complex is dependent on binding of ATP.

It localises to the cytoplasm. The enzyme catalyses ATP-dependent cleavage of peptide bonds with broad specificity.. Allosterically activated by HslU binding. Functionally, protease subunit of a proteasome-like degradation complex believed to be a general protein degrading machinery. This chain is ATP-dependent protease subunit HslV, found in Halalkalibacterium halodurans (strain ATCC BAA-125 / DSM 18197 / FERM 7344 / JCM 9153 / C-125) (Bacillus halodurans).